Consider the following 415-residue polypeptide: Sucrose permease (415 aa).

The Cytoplasmic portion of the chain corresponds to 1–16 (MALNIPFRNAYYRFAS). The chain crosses the membrane as a helical span at residues 17–37 (SYSFLFFISWSLWWSLYAIWL). Residues 38–48 (KGHLGLTGTEL) lie on the Periplasmic side of the membrane. Residues 49 to 69 (GTLYSVNQFTSILFMMFYGIV) traverse the membrane as a helical segment. Topologically, residues 70 to 77 (QDKLGLKK) are cytoplasmic. Residues 78-98 (PLIWCMSFILVLTGPFMIYVY) traverse the membrane as a helical segment. At 99-107 (EPLLQSNFS) the chain is on the periplasmic side. Residues 108–128 (VGLILGALFFGLGYLAGCGLL) traverse the membrane as a helical segment. At 129 to 147 (DSFTEKMARNFHFEYGTAR) the chain is on the cytoplasmic side. Residues 148-167 (AWGSFGYAIGAFFAGIFFSI) form a helical membrane-spanning segment. Topologically, residues 168 to 170 (SPH) are periplasmic. Residues 171 to 190 (INFWLVSLFGAVFMMINMRF) form a helical membrane-spanning segment. Over 191 to 220 (KDKDHQCIAADAGGVKKEDFIAVFKDRNFW) the chain is Cytoplasmic. The helical transmembrane segment at 221-241 (VFVIFIVGTWSFYNIFDQQLF) threads the bilayer. Residues 242–260 (PVFYAGLFESHDVGTRLYG) are Periplasmic-facing. Residues 261-281 (YLNSFQVVLEALCMAIIPFFV) traverse the membrane as a helical segment. Topologically, residues 282–287 (NRVGPK) are cytoplasmic. Residues 288 to 308 (NALLIGVVIMALRILSCALFV) traverse the membrane as a helical segment. Over 309–311 (NPW) the chain is Periplasmic. The helical transmembrane segment at 312-332 (IISLVKLLHAIEVPLCVISVF) threads the bilayer. Topologically, residues 333–342 (KYSVANFDKR) are cytoplasmic. Residues 343 to 363 (LSSTIFLIGFQIASSLGIVLL) traverse the membrane as a helical segment. The Periplasmic segment spans residues 364-377 (STPTGILFDHAGYQ). Residues 378-398 (TVFFAISGIVCLMLLFGIFFL) form a helical membrane-spanning segment. Over 399-415 (SKKREQIVMETPVPSAI) the chain is Cytoplasmic.

This sequence belongs to the major facilitator superfamily. Oligosaccharide:H(+) symporter (OHS) (TC 2.A.1.5) family.

It is found in the cell inner membrane. Its pathway is glycan biosynthesis; sucrose metabolism. In terms of biological role, responsible for transport of sucrose into the cell, with the concomitant import of a proton (symport system). Can also transport maltose, fructose or lactulose, but not glucose, lactose or melibiose. The substrate specificity is directed toward the fructofuranosyl moiety of the substrate. In Escherichia coli, this protein is Sucrose permease.